The primary structure comprises 253 residues: 5'-nucleotidase SurE (253 aa).

4 residues coordinate a divalent metal cation: Asp8, Asp9, Ser40, and Asn92.

The protein belongs to the SurE nucleotidase family. A divalent metal cation serves as cofactor.

Its subcellular location is the cytoplasm. The catalysed reaction is a ribonucleoside 5'-phosphate + H2O = a ribonucleoside + phosphate. Nucleotidase that shows phosphatase activity on nucleoside 5'-monophosphates. This Hyphomonas neptunium (strain ATCC 15444) protein is 5'-nucleotidase SurE.